Here is a 331-residue protein sequence, read N- to C-terminus: 4-hydroxythreonine-4-phosphate dehydrogenase (331 aa).

Histidine 137 and threonine 138 together coordinate substrate. Histidine 167, histidine 212, and histidine 267 together coordinate a divalent metal cation. Substrate-binding residues include lysine 275, asparagine 284, and arginine 293.

It belongs to the PdxA family. In terms of assembly, homodimer. Zn(2+) serves as cofactor. Mg(2+) is required as a cofactor. Requires Co(2+) as cofactor.

Its subcellular location is the cytoplasm. It carries out the reaction 4-(phosphooxy)-L-threonine + NAD(+) = 3-amino-2-oxopropyl phosphate + CO2 + NADH. It participates in cofactor biosynthesis; pyridoxine 5'-phosphate biosynthesis; pyridoxine 5'-phosphate from D-erythrose 4-phosphate: step 4/5. Its function is as follows. Catalyzes the NAD(P)-dependent oxidation of 4-(phosphooxy)-L-threonine (HTP) into 2-amino-3-oxo-4-(phosphooxy)butyric acid which spontaneously decarboxylates to form 3-amino-2-oxopropyl phosphate (AHAP). This Yersinia pseudotuberculosis serotype I (strain IP32953) protein is 4-hydroxythreonine-4-phosphate dehydrogenase.